The chain runs to 320 residues: Aspartate carbamoyltransferase catalytic subunit (320 aa).

Residues arginine 68 and threonine 69 each coordinate carbamoyl phosphate. Lysine 96 lines the L-aspartate pocket. Carbamoyl phosphate-binding residues include arginine 118, histidine 148, and glutamine 151. The L-aspartate site is built by arginine 181 and arginine 236. Residues glycine 277 and proline 278 each contribute to the carbamoyl phosphate site.

This sequence belongs to the aspartate/ornithine carbamoyltransferase superfamily. ATCase family. Heterododecamer (2C3:3R2) of six catalytic PyrB chains organized as two trimers (C3), and six regulatory PyrI chains organized as three dimers (R2).

It carries out the reaction carbamoyl phosphate + L-aspartate = N-carbamoyl-L-aspartate + phosphate + H(+). It functions in the pathway pyrimidine metabolism; UMP biosynthesis via de novo pathway; (S)-dihydroorotate from bicarbonate: step 2/3. In terms of biological role, catalyzes the condensation of carbamoyl phosphate and aspartate to form carbamoyl aspartate and inorganic phosphate, the committed step in the de novo pyrimidine nucleotide biosynthesis pathway. This Paracidovorax citrulli (strain AAC00-1) (Acidovorax citrulli) protein is Aspartate carbamoyltransferase catalytic subunit.